The sequence spans 100 residues: Small ribosomal subunit protein uS14c (100 aa).

This sequence belongs to the universal ribosomal protein uS14 family. Part of the 30S ribosomal subunit.

The protein resides in the plastid. Its subcellular location is the chloroplast. Binds 16S rRNA, required for the assembly of 30S particles. The protein is Small ribosomal subunit protein uS14c of Aethionema grandiflorum (Persian stone-cress).